The sequence spans 248 residues: ATP synthase subunit a, chloroplastic (248 aa).

The next 5 helical transmembrane spans lie at 37 to 57 (GQVL…AFLG), 96 to 116 (VPFV…GALV), 135 to 155 (INTT…AGFH), 200 to 220 (LVVA…MMFL), and 221 to 241 (GLFT…AYIG).

This sequence belongs to the ATPase A chain family. In terms of assembly, F-type ATPases have 2 components, CF(1) - the catalytic core - and CF(0) - the membrane proton channel. CF(1) has five subunits: alpha(3), beta(3), gamma(1), delta(1), epsilon(1). CF(0) has four main subunits: a, b, b' and c.

Its subcellular location is the plastid. It is found in the chloroplast thylakoid membrane. Key component of the proton channel; it plays a direct role in the translocation of protons across the membrane. The chain is ATP synthase subunit a, chloroplastic from Staurastrum punctulatum (Green alga).